The sequence spans 185 residues: UPF0397 protein CPR_1556 (185 aa).

Transmembrane regions (helical) follow at residues 11–31 (IVAI…GSLP), 44–64 (AFLS…IGFI), 71–91 (IVFF…VGLI), 111–131 (IFMF…LVAP), and 149–169 (GVIG…VLIS).

This sequence belongs to the UPF0397 family.

It is found in the cell membrane. The protein is UPF0397 protein CPR_1556 of Clostridium perfringens (strain SM101 / Type A).